The following is a 147-amino-acid chain: Hemoglobin subunit beta (147 aa).

An N-acetylvaline modification is found at Val-2. Positions 3–147 (NLSGDEKNAV…VANALAHRYH (145 aa)) constitute a Globin domain. Position 45 is a phosphoserine (Ser-45). Lys-60 is subject to N6-acetyllysine. His-64 contacts heme b. N6-acetyllysine is present on Lys-83. Position 93 (His-93) interacts with heme b. Cys-94 carries the S-nitrosocysteine modification.

This sequence belongs to the globin family. Heterotetramer of two alpha chains and two beta chains. As to expression, red blood cells.

Functionally, involved in oxygen transport from the lung to the various peripheral tissues. The polypeptide is Hemoglobin subunit beta (HBB) (Vicugna pacos (Alpaca)).